The chain runs to 215 residues: Cytochrome b6 (215 aa).

The chain crosses the membrane as a helical span at residues 32–52 (IFYCIGGITFTCFIMQVASGF). Cysteine 35 contributes to the heme c binding site. Histidine 86 and histidine 100 together coordinate heme b. The next 3 helical transmembrane spans lie at 90–110 (ASMMVLTMILHVFRVYLTGGF), 116–136 (LTWVTGVILAVCTVSFGVTGY), and 186–206 (LHTFVLPLLTAVFMLAHFLMI). Residues histidine 187 and histidine 202 each contribute to the heme b site.

The protein belongs to the cytochrome b family. PetB subfamily. The 4 large subunits of the cytochrome b6-f complex are cytochrome b6, subunit IV (17 kDa polypeptide, PetD), cytochrome f and the Rieske protein, while the 4 small subunits are PetG, PetL, PetM and PetN. The complex functions as a dimer. Heme b is required as a cofactor. Requires heme c as cofactor.

The protein resides in the plastid. The protein localises to the chloroplast thylakoid membrane. Component of the cytochrome b6-f complex, which mediates electron transfer between photosystem II (PSII) and photosystem I (PSI), cyclic electron flow around PSI, and state transitions. This chain is Cytochrome b6, found in Mesostigma viride (Green alga).